A 1165-amino-acid polypeptide reads, in one-letter code: MDSIIGRSQFVSETANLFTDEKTATARAKVVDWCNELVIASPSTKCELLAKVQETVLGSCAELAEEFLESVLSLAHDSNMEVRKQVVAFVEQVCKVKVELLPHVINVVSMLLRDNSAQVIKRVIQACGSIYKNGLQYLCSLMEPGDSAEQAWNILSLIKAQILDMIDNENDGIRTNAIKFLEGVVVLQSFADEDSLKRDGDFSLADVPDHCTLFRREKLQEEGNNILDILLQFHGTTHISSVNLIACTSSLCTIAKMRPIFMGAVVEAFKQLNANLPPTLTDSQVSSVRKSLKMQLQTLLKNRGAFEFASTIRGMLVDLGSSTNEIQKLIPKMDKQEMARRQKRILENAAQSLAKRARLACEQQDQQQREMELDTEELERQKQKSTRVNEKFLAEHFRNPETVVTLVLEFLPSLPTEVPQKFLQEYTPIREMSIQQQVTNISRFFGEQLSEKRLGPGAATFSREPPMRVKKVQAIESTLTAMEVDEDAVQKLSEEEFQRKEEATKKLRETMERAKGEQTVIEKMKERAKTLKLQEITKPLPRNLKEKFLTDAVRRILNSERQCIKGGVSSKRRKLVTVIAATFPDNVRYGIMEFILEDIKQRIDLAFSWLFEEYSLLQGFTRHTYVKTENRPDHAYNELLNKLIFGIGERCDHKDKIILIRRVYLEAPILPEVSIGHLVQLSLDDEFSQHGLELIKDLAVLRPPRKNRFVRVLLNFSVHERLDLRDLAQAHLVSLYHVHKILPARIDEFALEWLKFIEQESPPAAVFSQDFGRPTEEPDWREDTTKVCFGLAFTLLPYKPEVYLQQICQVFVSTSAELKRTILRSLDIPIKKMGVESPTLLQLIEDCPKGMETLVIRIIYILTERVPSPHEELVRRVRDLYQNKVKDVRVMIPVLSGLTRSELISVLPKLIKLNPAVVKEVFNRLLGIGAEFAHQTMAMTPTDILVALHTIDTSVCDIKAIVKATSLCLAERDLYTQEVLMAVLQQLVEVTPLPTLMMRTTIQSLTLYPRLANFVMNLLQRLIIKQVWRQKVIWEGFLKTVQRLKPQSMPILLHLPPAQLVDALQQCPDLRPALSEYAESMQDEPMNGSGITQQVLDIISGKSVDVFVTDESGGYISAEHIKKEAPDPSEISVISTVPVLTSLVPLPVPPPIGSDLNQPLPPGED.

HEAT repeat units lie at residues 23-58 (TATA…TVLG), 61-95 (AELA…QVCK), 98-140 (VELL…YLCS), 147-186 (SAEQ…GVVV), and 218-257 (KLQE…IAKM). The segment at 365–384 (DQQQREMELDTEELERQKQK) is disordered. Over residues 367-384 (QQREMELDTEELERQKQK) the composition is skewed to basic and acidic residues.

This sequence belongs to the Symplekin family. Interacts with Cpsf73 and Cpsf100 forming a core cleavage factor required for both polyadenylated and histone mRNA processing. Interacts with Slbp and Lsm11.

It localises to the nucleus. In terms of biological role, component of a protein complex required for cotranscriptional processing of 3'-ends of polyadenylated and histone pre-mRNA. Involved in germline stem cell transit amplification, differentiation and mitosis-to-meiosis transition. This chain is Symplekin, found in Drosophila melanogaster (Fruit fly).